Here is a 160-residue protein sequence, read N- to C-terminus: Bacterial microcompartment shell protein PduK (160 aa).

The 86-residue stretch at Ser11–Thr96 folds into the BMC domain.

It belongs to the bacterial microcompartments protein family. As to quaternary structure, interacts with shell proteins PduA and PduP and assembly protein PduM. The cofactor is Fe cation.

Its subcellular location is the bacterial microcompartment. It participates in polyol metabolism; 1,2-propanediol degradation. Its function is as follows. A minor shell protein of the bacterial microcompartment (BMC) dedicated to 1,2-propanediol (1,2-PD) degradation. The isolated BMC shell component protein ratio for J:A:B':B:K:T:U is approximately 15:10:7:6:1:1:2. Not required for structural integrity of BMCs nor to mitigate propionaldehyde toxicity, it might be involved in spatial organization of BMCs. In terms of biological role, the 1,2-PD-specific bacterial microcompartment (BMC) concentrates low levels of 1,2-PD catabolic enzymes, concentrates volatile reaction intermediates thus enhancing pathway flux and keeps the level of toxic, mutagenic propionaldehyde low. This Salmonella typhimurium (strain LT2 / SGSC1412 / ATCC 700720) protein is Bacterial microcompartment shell protein PduK.